A 32-amino-acid polypeptide reads, in one-letter code: MSDINATCLPAWLALCPCVGDDVNPTLTRGGT.

Residues 1–10 constitute a propeptide that is removed on maturation; that stretch reads MSDINATCLP. Residues 11-17 constitute a cross-link (cyclopeptide (Ala-Pro)); that stretch reads AWLALCP. A propeptide spanning residues 18-32 is cleaved from the precursor; it reads CVGDDVNPTLTRGGT.

It belongs to the MSDIN fungal toxin family. Processed by the macrocyclase-peptidase enzyme POPB to yield a toxic cyclic heptapeptide. POPB first removes 10 residues from the N-terminus. Conformational trapping of the remaining peptide forces the enzyme to release this intermediate rather than proceed to macrocyclization. The enzyme rebinds the remaining peptide in a different conformation and catalyzes macrocyclization of the N-terminal 7 residues.

Functionally, probable toxin that belongs to the MSDIN-like toxin family responsible for a large number of food poisoning cases and deaths. The sequence is that of MSDIN-like toxin proprotein 1 from Amanita fuligineoides.